The following is a 224-amino-acid chain: Ribosome maturation factor RimP (224 aa).

The disordered stretch occupies residues 194–224; sequence REGRIPGDDLGSEEAGEQSDETASGEAEDKE. A compositionally biased stretch (acidic residues) spans 203 to 213; that stretch reads LGSEEAGEQSD.

The protein belongs to the RimP family.

It is found in the cytoplasm. Its function is as follows. Required for maturation of 30S ribosomal subunits. The chain is Ribosome maturation factor RimP from Brucella anthropi (strain ATCC 49188 / DSM 6882 / CCUG 24695 / JCM 21032 / LMG 3331 / NBRC 15819 / NCTC 12168 / Alc 37) (Ochrobactrum anthropi).